The following is a 242-amino-acid chain: ATP synthase subunit a (242 aa).

The next 6 membrane-spanning stretches (helical) occupy residues 29 to 49 (SSIY…LAFY), 84 to 104 (FIPL…LGMT), 114 to 134 (IIVT…VGFV), 140 to 160 (FLTL…MIVI), 181 to 201 (MAGH…MIYL), and 203 to 223 (FLPI…AILQ).

The protein belongs to the ATPase A chain family. As to quaternary structure, F-type ATPases have 2 components, CF(1) - the catalytic core - and CF(0) - the membrane proton channel. CF(1) has five subunits: alpha(3), beta(3), gamma(1), delta(1), epsilon(1). CF(0) has three main subunits: a(1), b(2) and c(9-12). The alpha and beta chains form an alternating ring which encloses part of the gamma chain. CF(1) is attached to CF(0) by a central stalk formed by the gamma and epsilon chains, while a peripheral stalk is formed by the delta and b chains.

The protein localises to the cell inner membrane. Its function is as follows. Key component of the proton channel; it plays a direct role in the translocation of protons across the membrane. This Rickettsia rickettsii (strain Sheila Smith) protein is ATP synthase subunit a.